A 319-amino-acid chain; its full sequence is ATP-dependent 6-phosphofructokinase (319 aa).

Gly11 is a binding site for ATP. 21 to 25 (RAAVR) contacts ADP. ATP-binding positions include 72–73 (RS) and 102–105 (GDGS). Asp103 contacts Mg(2+). 125-127 (TID) lines the substrate pocket. Asp127 serves as the catalytic Proton acceptor. Arg154 is an ADP binding site. Substrate contacts are provided by residues Arg162 and 169–171 (MGR). Residues 185–187 (GAE), Arg211, and 213–215 (KKH) contribute to the ADP site. Residues Glu222, Arg243, and 249-252 (HIQR) each bind substrate.

It belongs to the phosphofructokinase type A (PFKA) family. ATP-dependent PFK group I subfamily. Prokaryotic clade 'B1' sub-subfamily. As to quaternary structure, homotetramer. The cofactor is Mg(2+).

The protein localises to the cytoplasm. The enzyme catalyses beta-D-fructose 6-phosphate + ATP = beta-D-fructose 1,6-bisphosphate + ADP + H(+). The protein operates within carbohydrate degradation; glycolysis; D-glyceraldehyde 3-phosphate and glycerone phosphate from D-glucose: step 3/4. With respect to regulation, allosterically activated by ADP and other diphosphonucleosides, and allosterically inhibited by phosphoenolpyruvate. Functionally, catalyzes the phosphorylation of D-fructose 6-phosphate to fructose 1,6-bisphosphate by ATP, the first committing step of glycolysis. This is ATP-dependent 6-phosphofructokinase from Brevibacillus brevis (strain 47 / JCM 6285 / NBRC 100599).